Consider the following 269-residue polypeptide: Tetrahydromethanopterin S-methyltransferase subunit C (269 aa).

8 consecutive transmembrane segments (helical) span residues 18–38, 39–59, 62–82, 84–104, 106–126, 152–172, 180–200, and 222–242; these read VLVI…FVPS, LAML…ANTT, VAAY…LGMG, ISAL…ALPF, LVLA…FIVG, ALAI…DLII, IIAL…NACI, and LVFS…VFWI.

The protein belongs to the MtrC family. As to quaternary structure, the complex is composed of 8 subunits; MtrA, MtrB, MtrC, MtrD, MtrE, MtrF, MtrG and MtrH.

The protein resides in the cell membrane. It carries out the reaction 5-methyl-5,6,7,8-tetrahydromethanopterin + coenzyme M + 2 Na(+)(in) = 5,6,7,8-tetrahydromethanopterin + methyl-coenzyme M + 2 Na(+)(out). Its pathway is one-carbon metabolism; methanogenesis from CO(2); methyl-coenzyme M from 5,10-methylene-5,6,7,8-tetrahydromethanopterin: step 2/2. Part of a complex that catalyzes the formation of methyl-coenzyme M and tetrahydromethanopterin from coenzyme M and methyl-tetrahydromethanopterin. This is an energy-conserving, sodium-ion translocating step. The polypeptide is Tetrahydromethanopterin S-methyltransferase subunit C (Methanococcus vannielii (strain ATCC 35089 / DSM 1224 / JCM 13029 / OCM 148 / SB)).